Consider the following 421-residue polypeptide: 4-hydroxy-3-methylbut-2-en-1-yl diphosphate synthase (flavodoxin) (421 aa).

4 residues coordinate [4Fe-4S] cluster: cysteine 311, cysteine 314, cysteine 357, and glutamate 364.

Belongs to the IspG family. It depends on [4Fe-4S] cluster as a cofactor.

The catalysed reaction is (2E)-4-hydroxy-3-methylbut-2-enyl diphosphate + oxidized [flavodoxin] + H2O + 2 H(+) = 2-C-methyl-D-erythritol 2,4-cyclic diphosphate + reduced [flavodoxin]. It functions in the pathway isoprenoid biosynthesis; isopentenyl diphosphate biosynthesis via DXP pathway; isopentenyl diphosphate from 1-deoxy-D-xylulose 5-phosphate: step 5/6. Converts 2C-methyl-D-erythritol 2,4-cyclodiphosphate (ME-2,4cPP) into 1-hydroxy-2-methyl-2-(E)-butenyl 4-diphosphate. This is 4-hydroxy-3-methylbut-2-en-1-yl diphosphate synthase (flavodoxin) from Xanthomonas oryzae pv. oryzae (strain MAFF 311018).